Here is a 336-residue protein sequence, read N- to C-terminus: MSQPSGGRAPGTRIYSWSCPTVMSPGEKLDPIPDSFILQPPVFHPVVPYVTTIFGGLHAGKMVMLQGVVPLDAHRFQVDFQCGCSLCPRPDIAFHFNPRFHTTKPHVICNTLHGGRWQREARWPHLALRRGSSFLILFLFGNEEVKVSVNGQHFLHFRYRLPLSHVDTLGIFGDILVEAVGFLNINPFVEGSREYPAGHPFLLMSPRLEVPCSHALPQGLSPGQVIIVRGLVLQEPKHFTVSLRDQAAHAPVTLRASFADRTLAWISRWGQKKLISAPFLFYPQRFFEVLLLFQEGGLKLALNGQGLGATSMNQQALEQLRELRISGSVQLYCVHS.

2 Galectin domains span residues 49-183 (YVTT…VGFL) and 212-336 (CSHA…CVHS).

Not widely expressed. Predominantly expressed in adipose tissue.

The protein resides in the nucleus. Binds lactose. May participate in the apoptosis of adipocytes. The sequence is that of Galectin-12 (LGALS12) from Homo sapiens (Human).